Here is a 409-residue protein sequence, read N- to C-terminus: Evolutionarily conserved signaling intermediate in Toll pathway, mitochondrial (409 aa).

The transit peptide at 1-26 (MLRRAQCLLRLHGNGGHSLVSRFRNY) directs the protein to the mitochondrion. Disordered stretches follow at residues 27–53 (ATDEGNPKQNPNPNPRAQKPGTKNLPA) and 383–409 (EEIEGGASVPATSDNSSQDEHISSRQK). Residues 400-409 (QDEHISSRQK) are compositionally biased toward basic and acidic residues.

The protein belongs to the ECSIT family. As to quaternary structure, interacts with Traf6. Associates with mitochondrial complex I assembly intermediates during its biogenesis.

The protein resides in the cytoplasm. It is found in the nucleus. The protein localises to the mitochondrion. Functionally, as part of the MCIA complex, involved in the assembly of the mitochondrial complex I. Involved in the innate immune response; promotes the production of antibacterial peptides. The polypeptide is Evolutionarily conserved signaling intermediate in Toll pathway, mitochondrial (Drosophila melanogaster (Fruit fly)).